The following is a 328-amino-acid chain: Organic solute transporter alpha-like protein (328 aa).

The Extracellular segment spans residues 1-44 (MNASENYFTMDPTENISQVLDQNRNNTNSLRTHPTVEEYYENMT). N-linked (GlcNAc...) asparagine glycans are attached at residues Asn-2, Asn-15, Asn-25, and Asn-42. A helical membrane pass occupies residues 45–65 (AFLSLAIFIASLLTILNISIF). Over 66-84 (ATTVSRLRRHLDKPLLGPS) the chain is Cytoplasmic. A helical transmembrane segment spans residues 85–105 (IMMVGLYPIISVAALVTILVP). Residue Tyr-106 is a topological domain, extracellular. The helical transmembrane segment at 107–127 (SWFICHTVMHVMFMVGGPVFR) threads the bilayer. Residues 128-177 (TLLFRYVGSEQNYVKETAGEAVQLNTPPCCCCCLCLPMVIPTKAKLCISR) lie on the Cytoplasmic side of the membrane. The chain crosses the membrane as a helical span at residues 178 to 198 (YMVWQMPFWQGSIMLVMNILY). The Extracellular segment spans residues 199-208 (YRDIQLYRQV). Residues 209–229 (MFFFIPFIVCSIVLGAWSLQI) traverse the membrane as a helical segment. The Cytoplasmic portion of the chain corresponds to 230 to 247 (TVRMITKVRGDYQLRKKM). The chain crosses the membrane as a helical span at residues 248–265 (FCLQLVVMLCKLQYLVLY). Residues 266–287 (DQLDGIKMGGEYPINHTVYKQT) are Extracellular-facing. Asn-280 is a glycosylation site (N-linked (GlcNAc...) asparagine). A helical membrane pass occupies residues 288 to 308 (IINILILVEMVLVSMMVQSAY). Over 309–328 (RTPVQVQIDEVNKEKEVTRI) the chain is Cytoplasmic.

It belongs to the OST-alpha family.

It is found in the cell membrane. Functionally, probable transporter. The chain is Organic solute transporter alpha-like protein from Drosophila melanogaster (Fruit fly).